We begin with the raw amino-acid sequence, 589 residues long: Kelch-like protein 25 (589 aa).

Residues 46–114 (TDVTLWAGNR…AYSSKIIINE (69 aa)) enclose the BTB domain. The region spanning 149 to 250 (CLGMMILSDA…LPSELLKEAV (102 aa)) is the BACK domain. Kelch repeat units lie at residues 296 to 340 (TLLI…AIGC), 341 to 388 (KVYV…ELEN), 389 to 444 (CLYV…SAKL), 446 to 492 (LFAF…VLGS), 493 to 538 (QIFI…ASGN), and 539 to 585 (KVYV…STWK).

In terms of assembly, component of the BCR(KLHL25) E3 ubiquitin ligase complex, at least composed of cul3, klhl25 and rbx1.

It participates in protein modification; protein ubiquitination. Its function is as follows. Substrate-specific adapter of a BCR (BTB-CUL3-RBX1) E3 ubiquitin ligase complex involved in various processes, such as translation homeostasis and lipid synthesis. The BCR(KLHL25) ubiquitin ligase complex acts by mediating ubiquitination of hypophosphorylated eif4ebp1 (4E-BP1): ubiquitination and subsequent degradation of hypophosphorylated EIF4EBP1 (4E-BP1) probably serves as a homeostatic mechanism to maintain translation and prevent eIF4E inhibition when eIF4E levels are low. The BCR(KLHL25) complex also acts as a regulator of lipid synthesis by mediating ubiquitination and degradation of ACLY, thereby inhibiting lipid synthesis. The polypeptide is Kelch-like protein 25 (Xenopus tropicalis (Western clawed frog)).